We begin with the raw amino-acid sequence, 346 residues long: Protein SHI RELATED SEQUENCE 5 (346 aa).

A disordered region spans residues 7-31 (LGGRDNNSNNNKQDHHQVDKDHHHQ). Over residues 18 to 31 (KQDHHQVDKDHHHQ) the composition is skewed to basic and acidic residues. The Zn(2+) site is built by Cys125, Cys128, Cys136, Cys141, Cys145, and Cys152. A DNA-binding region (zn(2)-C6 fungal-type; degenerate) is located at residues 125 to 152 (CQDCGNQAKKDCPHMRCRTCCKSRGFHC). A compositionally biased stretch (polar residues) spans 175 to 186 (SLQHHSASSRET). Residues 175-215 (SLQHHSASSRETQNAKRLREASGGDNNDDKDHSGGGGSALA) are disordered. Positions 187–207 (QNAKRLREASGGDNNDDKDHS) are enriched in basic and acidic residues. Positions 269–272 (IGGH) match the Required for homo- and heterodimerization motif.

The protein belongs to the SHI protein family.

Its subcellular location is the nucleus. Transcription activator that binds DNA on 5'-ACTCTAC-3' and promotes auxin homeostasis-regulating gene expression (e.g. YUC genes), as well as genes affecting stamen development, cell expansion and timing of flowering. Synergistically with other SHI-related proteins, regulates gynoecium, stamen and leaf development in a dose-dependent manner, controlling apical-basal patterning. Promotes style and stigma formation, and influences vascular development during gynoecium development. May also have a role in the formation and/or maintenance of the shoot apical meristem (SAM). This is Protein SHI RELATED SEQUENCE 5 (SRS5) from Arabidopsis thaliana (Mouse-ear cress).